A 139-amino-acid chain; its full sequence is Small ribosomal subunit protein uS19 (139 aa).

The protein belongs to the universal ribosomal protein uS19 family.

Functionally, protein S19 forms a complex with S13 that binds strongly to the 16S ribosomal RNA. This chain is Small ribosomal subunit protein uS19, found in Methanoregula boonei (strain DSM 21154 / JCM 14090 / 6A8).